We begin with the raw amino-acid sequence, 99 residues long: Large ribosomal subunit protein uL23 (99 aa).

The protein belongs to the universal ribosomal protein uL23 family. Part of the 50S ribosomal subunit. Contacts protein L29, and trigger factor when it is bound to the ribosome.

One of the early assembly proteins it binds 23S rRNA. One of the proteins that surrounds the polypeptide exit tunnel on the outside of the ribosome. Forms the main docking site for trigger factor binding to the ribosome. The protein is Large ribosomal subunit protein uL23 of Ectopseudomonas mendocina (strain ymp) (Pseudomonas mendocina).